A 122-amino-acid chain; its full sequence is S-adenosylmethionine decarboxylase proenzyme (122 aa).

Catalysis depends on serine 69, which acts as the Schiff-base intermediate with substrate; via pyruvic acid. Serine 69 is subject to Pyruvic acid (Ser); by autocatalysis. Histidine 74 acts as the Proton acceptor; for processing activity in catalysis. The active-site Proton donor; for catalytic activity is cysteine 89.

It belongs to the prokaryotic AdoMetDC family. Type 1 subfamily. Heterotetramer of two alpha and two beta chains arranged as a dimer of alpha/beta heterodimers. Pyruvate is required as a cofactor. Is synthesized initially as an inactive proenzyme. Formation of the active enzyme involves a self-maturation process in which the active site pyruvoyl group is generated from an internal serine residue via an autocatalytic post-translational modification. Two non-identical subunits are generated from the proenzyme in this reaction, and the pyruvate is formed at the N-terminus of the alpha chain, which is derived from the carboxyl end of the proenzyme. The post-translation cleavage follows an unusual pathway, termed non-hydrolytic serinolysis, in which the side chain hydroxyl group of the serine supplies its oxygen atom to form the C-terminus of the beta chain, while the remainder of the serine residue undergoes an oxidative deamination to produce ammonia and the pyruvoyl group blocking the N-terminus of the alpha chain.

It carries out the reaction S-adenosyl-L-methionine + H(+) = S-adenosyl 3-(methylsulfanyl)propylamine + CO2. Its pathway is amine and polyamine biosynthesis; S-adenosylmethioninamine biosynthesis; S-adenosylmethioninamine from S-adenosyl-L-methionine: step 1/1. Functionally, catalyzes the decarboxylation of S-adenosylmethionine to S-adenosylmethioninamine (dcAdoMet), the propylamine donor required for the synthesis of the polyamines spermine and spermidine from the diamine putrescine. This Saccharolobus islandicus (strain L.S.2.15 / Lassen #1) (Sulfolobus islandicus) protein is S-adenosylmethionine decarboxylase proenzyme.